An 82-amino-acid polypeptide reads, in one-letter code: Putative defensin-like protein 48 (82 aa).

Residues 1–28 (MGIKTLIIFFHIFILAVLSSNNIILTSG) form the signal peptide. Intrachain disulfides connect cysteine 39/cysteine 80, cysteine 43/cysteine 67, cysteine 53/cysteine 78, and cysteine 57/cysteine 79.

Belongs to the DEFL family.

It localises to the secreted. This Arabidopsis thaliana (Mouse-ear cress) protein is Putative defensin-like protein 48.